A 518-amino-acid chain; its full sequence is Glutamate--cysteine ligase (518 aa).

Belongs to the glutamate--cysteine ligase type 1 family. Type 1 subfamily.

It catalyses the reaction L-cysteine + L-glutamate + ATP = gamma-L-glutamyl-L-cysteine + ADP + phosphate + H(+). Its pathway is sulfur metabolism; glutathione biosynthesis; glutathione from L-cysteine and L-glutamate: step 1/2. In Buchnera aphidicola subsp. Acyrthosiphon pisum (strain 5A), this protein is Glutamate--cysteine ligase.